Here is a 1040-residue protein sequence, read N- to C-terminus: Tudor domain-containing protein 5 (1040 aa).

HTH OST-type domains lie at 7–80, 122–197, and 291–365; these read IQDC…KAIP, VPPI…LKKS, and VDPE…FDAD. The region spanning 533–592 is the Tudor domain; it reads FIQPGHLCCVKISEDKWWYRVIIHRILGKKEVEVFYPDFGNIGTVQKSSLRFLKCCYTKL. S809 is modified (phosphoserine). Disordered regions lie at residues 857–891 and 912–975; these read DVKG…YPLD and AERS…AKDK. Composition is skewed to polar residues over residues 872 to 891 and 912 to 924; these read EKNT…YPLD and AERS…SIQT. S943 is subject to Phosphoserine. Positions 946–956 are enriched in polar residues; that stretch reads NHSGSVESSPG. A compositionally biased stretch (basic and acidic residues) spans 958-975; sequence LKKEDVSNSRAEATAKDK.

Belongs to the TDRD5 family. In terms of tissue distribution, gonad-specific. Mainly expressed in testis. Present at low level in ovary (at protein level).

The protein localises to the cytoplasm. In terms of biological role, required during spermiogenesis to participate in the repression transposable elements and prevent their mobilization, which is essential for the germline integrity. Probably acts via the piRNA metabolic process, which mediates the repression of transposable elements during meiosis by forming complexes composed of piRNAs and Piwi proteins and govern the methylation and subsequent repression of transposons. Required for chromatoid body (CB) assembly. This is Tudor domain-containing protein 5 (Tdrd5) from Mus musculus (Mouse).